The sequence spans 524 residues: Lysine--tRNA ligase (524 aa).

Residues glutamate 433 and glutamate 440 each coordinate Mg(2+).

It belongs to the class-II aminoacyl-tRNA synthetase family. In terms of assembly, homodimer. Mg(2+) is required as a cofactor.

It localises to the cytoplasm. The catalysed reaction is tRNA(Lys) + L-lysine + ATP = L-lysyl-tRNA(Lys) + AMP + diphosphate. This Colwellia psychrerythraea (strain 34H / ATCC BAA-681) (Vibrio psychroerythus) protein is Lysine--tRNA ligase.